We begin with the raw amino-acid sequence, 294 residues long: HTH-type transcriptional regulator ClcR (294 aa).

The region spanning 1 to 58 (MEFRQLRYFIAVAEEGNIGAAARRLHISQPPITRQIQALEQDLGVVLFERTHRGVELT) is the HTH lysR-type domain. The segment at residues 18–37 (IGAAARRLHISQPPITRQIQ) is a DNA-binding region (H-T-H motif).

The protein belongs to the LysR transcriptional regulatory family.

The protein resides in the cytoplasm. In terms of biological role, involved in regulation of chlorinated catechol metabolism. Transcriptional activator of the clcABD chlorocatechol oxidative operon. This is HTH-type transcriptional regulator ClcR (clcR) from Pseudomonas putida (Arthrobacter siderocapsulatus).